A 181-amino-acid chain; its full sequence is Adenylyl-sulfate kinase (181 aa).

Position 20-27 (20-27 (GLSGAGKS)) interacts with ATP. Catalysis depends on Ser94, which acts as the Phosphoserine intermediate.

It belongs to the APS kinase family.

The enzyme catalyses adenosine 5'-phosphosulfate + ATP = 3'-phosphoadenylyl sulfate + ADP + H(+). The protein operates within sulfur metabolism; hydrogen sulfide biosynthesis; sulfite from sulfate: step 2/3. Catalyzes the synthesis of activated sulfate. The polypeptide is Adenylyl-sulfate kinase (Deinococcus geothermalis (strain DSM 11300 / CIP 105573 / AG-3a)).